We begin with the raw amino-acid sequence, 368 residues long: Peptide chain release factor 2 (368 aa).

N5-methylglutamine is present on Gln-251.

This sequence belongs to the prokaryotic/mitochondrial release factor family. Post-translationally, methylated by PrmC. Methylation increases the termination efficiency of RF2.

Its subcellular location is the cytoplasm. In terms of biological role, peptide chain release factor 2 directs the termination of translation in response to the peptide chain termination codons UGA and UAA. The protein is Peptide chain release factor 2 of Streptomyces avermitilis (strain ATCC 31267 / DSM 46492 / JCM 5070 / NBRC 14893 / NCIMB 12804 / NRRL 8165 / MA-4680).